Reading from the N-terminus, the 535-residue chain is MAQTALISVSDKTGILEFAQALHALGIKLLSTGGTAKLLADAGLPVTEVADHTGFPEMLDGRVKTLHPKIHGGLLARRDLPAHVAAIQEHGIDTIDLLVVNLYPFEATVAKAGCTLEDAIENIDIGGPAMVRSAAKNWKDVGVLTDASQYAVALAELQAGGKLSDKTKFAFSVAAFNRIADYDGAISDYLSAIDFDASIGQASPTRSMFPAQSNGRFVKVQDLRYGENPHQQAAFYRDLHPAPGSLVSAKQLQGKELSYNNIADADAAWECVKSFDVPACVIVKHANPCGVAVGKDAAEAYGKAFKTDPTSAFGGIIAFNRPVDGETAQAIAKQFVEVLMAPGYTPEALAVFQATKVKQNVRVLEIALPPGGTTDWDNGRNLMDVKRVGSGLLMQTADNHELAASDLKVVTKKQPTPEQLQDLLFAWKVAKYVKSNAIVFCAGGMTMGVGAGQMSRLDSARIASIKAEHAGLSLKGTAVASDAFFPFRDGLDVVVDAGASCVIQPGGSMRDQEVIDAADERGVVMVLSGVRHFRH.

The MGS-like domain maps to 1–145 (MAQTALISVS…KNWKDVGVLT (145 aa)).

The protein belongs to the PurH family.

It catalyses the reaction (6R)-10-formyltetrahydrofolate + 5-amino-1-(5-phospho-beta-D-ribosyl)imidazole-4-carboxamide = 5-formamido-1-(5-phospho-D-ribosyl)imidazole-4-carboxamide + (6S)-5,6,7,8-tetrahydrofolate. The catalysed reaction is IMP + H2O = 5-formamido-1-(5-phospho-D-ribosyl)imidazole-4-carboxamide. The protein operates within purine metabolism; IMP biosynthesis via de novo pathway; 5-formamido-1-(5-phospho-D-ribosyl)imidazole-4-carboxamide from 5-amino-1-(5-phospho-D-ribosyl)imidazole-4-carboxamide (10-formyl THF route): step 1/1. It functions in the pathway purine metabolism; IMP biosynthesis via de novo pathway; IMP from 5-formamido-1-(5-phospho-D-ribosyl)imidazole-4-carboxamide: step 1/1. The protein is Bifunctional purine biosynthesis protein PurH of Variovorax paradoxus (strain S110).